Here is a 344-residue protein sequence, read N- to C-terminus: MTAPTTTSPSSEATTTTTTTTLNTIATLHQSLTTETTPLPVRFRALFSLKHVAATHPATSAESLAAIDAIAAGFASPSALLKHELAYCLGQTANGAAIPYLTAVLEDTGEDAMCRHEAAEALGALGDVASLGVLKRFRDREGEEVVVTETCELAVERIEWENGEGKKAEKLRASDFSSVDPAPPTAQGQEEQTVEELGNALMDTSLPLFKRYRAMFALRDLASPPDLPTAVPAVLALAKGFADSSALFRHEIAFVFGQLAHPASIPALTEALSNTEEASMVRHEAAEALGSLGDEEGVEETLRKFLHDAEAVVRESVIVALDMAEYEKSNETEYALIPEAQGTA.

HEAT-like PBS-type repeat units follow at residues 81–107 (LKHELAYCLGQTANGAAIPYLTAVLED) and 115–140 (RHEAAEALGALGDVASLGVLKRFRDR). Fe cation-binding residues include His83, Glu84, His116, and Glu117. The disordered stretch occupies residues 169–188 (EKLRASDFSSVDPAPPTAQG). HEAT-like PBS-type repeat units follow at residues 210-240 (KRYRAMFALRDLASPPDLPTAVPAVLALAKG), 248-274 (FRHEIAFVFGQLAHPASIPALTEALSN), and 281-308 (VRHEAAEALGSLGDEEGVEETLRKFLHD). The Fe cation site is built by His250, Glu251, His283, and Glu284.

This sequence belongs to the deoxyhypusine hydroxylase family. Requires Fe(2+) as cofactor.

Its subcellular location is the cytoplasm. The protein resides in the nucleus. The catalysed reaction is [eIF5A protein]-deoxyhypusine + AH2 + O2 = [eIF5A protein]-hypusine + A + H2O. Its pathway is protein modification; eIF5A hypusination. In terms of biological role, catalyzes the hydroxylation of the N(6)-(4-aminobutyl)-L-lysine intermediate to form hypusine, an essential post-translational modification only found in mature eIF-5A factor. The chain is Deoxyhypusine hydroxylase from Chaetomium globosum (strain ATCC 6205 / CBS 148.51 / DSM 1962 / NBRC 6347 / NRRL 1970) (Soil fungus).